The sequence spans 246 residues: Bis(5'-nucleosyl)-tetraphosphatase PrpE [asymmetrical] (246 aa).

This sequence belongs to the PrpE family. Ni(2+) is required as a cofactor.

It catalyses the reaction P(1),P(4)-bis(5'-guanosyl) tetraphosphate + H2O = GMP + GTP + 2 H(+). Its function is as follows. Asymmetrically hydrolyzes Ap4p to yield AMP and ATP. This chain is Bis(5'-nucleosyl)-tetraphosphatase PrpE [asymmetrical], found in Bacillus thuringiensis (strain Al Hakam).